We begin with the raw amino-acid sequence, 140 residues long: Coiled-coil domain-containing protein 126 (140 aa).

The N-terminal stretch at 1–26 (MFFTISRKNMSQKLSLLLLVFGLIWG) is a signal peptide. 2 N-linked (GlcNAc...) asparagine glycosylation sites follow: N110 and N134. Residues 120–140 (TSGNLVPVTTNKRTNVSGSIR) form a disordered region.

The protein resides in the secreted. This Homo sapiens (Human) protein is Coiled-coil domain-containing protein 126 (CCDC126).